Here is a 279-residue protein sequence, read N- to C-terminus: NADPH-dependent 7-cyano-7-deazaguanine reductase (279 aa).

86 to 88 (IES) provides a ligand contact to substrate. NADPH is bound at residue 88–89 (SK). The active-site Thioimide intermediate is the C187. Residue D194 is the Proton donor of the active site. Position 226–227 (226–227 (HE)) interacts with substrate. 255–256 (RG) is a binding site for NADPH.

Belongs to the GTP cyclohydrolase I family. QueF type 2 subfamily. In terms of assembly, homodimer.

The protein localises to the cytoplasm. The catalysed reaction is 7-aminomethyl-7-carbaguanine + 2 NADP(+) = 7-cyano-7-deazaguanine + 2 NADPH + 3 H(+). It participates in tRNA modification; tRNA-queuosine biosynthesis. Catalyzes the NADPH-dependent reduction of 7-cyano-7-deazaguanine (preQ0) to 7-aminomethyl-7-deazaguanine (preQ1). This is NADPH-dependent 7-cyano-7-deazaguanine reductase from Pasteurella multocida (strain Pm70).